The following is a 1834-amino-acid chain: Non-reducing polyketide synthase spyA (1834 aa).

One can recognise a Starter acyltransferase (SAT) domain in the interval 91-255 (LAPLTVIIHL…TRIPIYGRYH (165 aa)). A Ketosynthase family 3 (KS3) domain is found at 385-801 (EHSIAVIGAA…GNNTAVIVCE (417 aa)). Residues Cys-551, His-687, and His-724 each act as for beta-ketoacyl synthase activity in the active site. Residues 919–1164 (YEGSSLLRSH…KELGPCTWVE (246 aa)) form the Malonyl-CoA:ACP transacylase (MAT) domain. The segment at 1269–1398 (PLVYLLRDEG…GVISLRQERH (130 aa)) is N-terminal hotdog fold. A PKS/mFAS DH domain is found at 1269–1577 (PLVYLLRDEG…FVRITASSLN (309 aa)). The segment at 1269–1577 (PLVYLLRDEG…FVRITASSLN (309 aa)) is product template (PT) domain. Residues 1428–1577 (AISLKEGIIY…FVRITASSLN (150 aa)) are C-terminal hotdog fold. A Carrier 1 domain is found at 1616-1690 (SDILSILSHL…TLCQEIQTQR (75 aa)). Ser-1650 carries the post-translational modification O-(pantetheine 4'-phosphoryl)serine. A disordered region spans residues 1693–1720 (RLARASRTTTATRNTSFSLGRRTSSTES). Over residues 1697–1710 (ASRTTTATRNTSFS) the composition is skewed to low complexity. The region spanning 1731–1807 (SKSAAVLAQL…GLARLILASE (77 aa)) is the Carrier 2 domain. Ser-1767 carries the post-translational modification O-(pantetheine 4'-phosphoryl)serine.

Pantetheine 4'-phosphate serves as cofactor.

It carries out the reaction 2 malonyl-CoA + acetyl-CoA + 2 H(+) = triacetate lactone + 2 CO2 + 3 CoA. It participates in secondary metabolite biosynthesis; terpenoid biosynthesis. Functionally, non-reducing polyketide synthase; part of the gene cluster that mediates the biosynthesis of meroterpenoids called sartorypyrones. The biosynthesis of sartorypyrones begins with the production of triacetic acid lactone (TAL) by the NR-PKS spyA using one molecule of acetyl-CoA and two molecules of malonyl-CoA. As spyA lacks a thioesterase (TE) domain, TAL is likely generated through self-release from spyA by spontaneous lactonization. After production of TAL, the prenyltransferase spyF then conjugates geranylgeranyl pyrophosphate (GGPP) to TAL to form geranylgeranyl-triacetate lactone, for which the pathway-specific geranylgeranyl pyrophosphate synthase (GGPS) spyE is required to provide GGPP. Subsequently, geranylgeranyl-triacetate lactone is epoxidized at the terminal olein by the FAD-dependent monooxygenase spyC, followed by cyclization of the terpenoid component catalyzed by the terpene cyclase spyD to produce both the bicyclic sartorypyrone F and the monocyclic sartorypyrone D. Finally, the last step of the biosynthesis involves the acetylation of the meroterpenoids sartorypyrones D and F by the acetyltransferase SpyB to produce sartorypyrones A and G, respectively. This is Non-reducing polyketide synthase spyA from Aspergillus fumigatus (strain ATCC MYA-4609 / CBS 101355 / FGSC A1100 / Af293) (Neosartorya fumigata).